We begin with the raw amino-acid sequence, 259 residues long: MFRRTTWLTLYLLLAMAALARPAFAMHIAEGFLPFNWAAFWFIVVLPFWIWGLRSIRHTVKSNPGLKMLLGLAGAYTFVLSALKLPSVTGSCSHPTGIGLGAVLFGPAAMSILGGIVLLFQALLLAHGGLSTLGANTFSMAVVGPFVAYGLYRLVRKLKGSMPLAVFLAATLGDLMTYVTTSLQLALAFPAQAGGVVASMLKFMGIFAVTQLPLAISEGFLTVIVFNLLATYNKNDLEELSIMPGKTAAEGGPSRQYSR.

A signal peptide spans 1–25 (MFRRTTWLTLYLLLAMAALARPAFA). 6 helical membrane-spanning segments follow: residues 31–51 (GFLPFNWAAFWFIVVLPFWIW), 68–88 (MLLGLAGAYTFVLSALKLPSV), 100–120 (LGAVLFGPAAMSILGGIVLLF), 132–152 (TLGANTFSMAVVGPFVAYGLY), 160–180 (GSMPLAVFLAATLGDLMTYVT), and 206–226 (IFAVTQLPLAISEGFLTVIVF).

The protein belongs to the CbiM family. In terms of assembly, forms an energy-coupling factor (ECF) transporter complex composed of an ATP-binding protein (A component, CbiO), a transmembrane protein (T component, CbiQ) and 2 possible substrate-capture proteins (S components, CbiM and CbiN) of unknown stoichimetry.

The protein resides in the cell membrane. The protein operates within cofactor biosynthesis; adenosylcobalamin biosynthesis. In terms of biological role, part of the energy-coupling factor (ECF) transporter complex CbiMNOQ involved in cobalt import. The polypeptide is Cobalt transport protein CbiM (Moorella thermoacetica (strain ATCC 39073 / JCM 9320)).